The chain runs to 872 residues: MELGKSKFSWKDLQYCDKAGTQNSPLRVVAHIDQDAFYAQVESVRLGLDHSVPLAVQQWQGLIAVNYAARAANISRHETVTEAKKKCPELCTAHVKTWKAGESEAKYHENPNPNYYKTCLDPYRHESVKILNIIKKHAPVVKKASIDECFIELTSDVKRIVLEEYPYLKIPSEDSNVALPQAPVLLWPAEFGMVIEEEVVDRTKEDYERDWDDVFLFYAAKIVKEIRDDIYLQLKYTCSAGVSFNPMLSKLVSSRNKPNKQTILTKNAIQDYLVSLKITDIRMLGGKFGEEIINLLGTDSIKDVWNMSMDFLIDKLGQTNGPLVWNLCHGIDNTEITTQVQIKSMLSAKNFSQQKVKSEEDAINWFQVFASDLRSRFLELEGMRRPKTICLTVVSRFLRKSRSSQIPMNVDISTQFIVEATSKLLRQLQQEFDVYPISNLSISFQNIIEVDRNSRGIEGFLKKSNDEIYMSTSVSPSIEGRAKLLNENMRENNSFELSSEKDIKSPKRLKRGKGKGIFDMLQQTAVSKPTENSADETYTCEECEQKITLSERNEHEDYHIALSISRKERYNNLVPPSHDKPKQVKPKTYGRKTGSKHYAPLSDETNNKRAFLDAFLGNGGNLTPNWKKQTPKAISNSSDNMTQLHLDLANSTVTCSECSMEYNSTSEEDILLHSRFHSRVLGGVTVSFQCSPIYRVNYGLSSDCIYSINSESSLIDQRKAEEALSFVNNELSSEPIETIGVDKYTTFLFISDKKCVGLLLAERISSAYIVDELELNNNNSTSSAVYIKNENLRKGFVLGISRIWVSASRRKQGIASLLLDNALKKFIYGYVISPAEVAFSQPSESGKQFIISWHRSRNNGSSKSLRYAVYES.

The segment at 1–591 (MELGKSKFSW…KQVKPKTYGR (591 aa)) is polymerase type-Y. The region spanning 29–285 (VAHIDQDAFY…LKITDIRMLG (257 aa)) is the UmuC domain. The segment at 533-567 (SADETYTCEECEQKITLSERNEHEDYHIALSISRK) adopts a UBZ3-type zinc-finger fold. Zn(2+) contacts are provided by Cys-540, Cys-543, His-555, and His-559. The interval 569–602 (RYNNLVPPSHDKPKQVKPKTYGRKTGSKHYAPLS) is disordered. The segment covering 583 to 595 (QVKPKTYGRKTGS) has biased composition (basic residues). An acetyltransferase region spans residues 592-872 (KTGSKHYAPL…KSLRYAVYES (281 aa)). A CCHH-type zinc finger spans residues 653–677 (VTCSECSMEYNSTSEEDILLHSRFH).

The protein in the C-terminal section; belongs to the acetyltransferase family. ECO subfamily. This sequence in the N-terminal section; belongs to the DNA polymerase type-Y family. In terms of assembly, interacts with pds5.

It localises to the nucleus. In terms of biological role, probable acetyltransferase required for the establishment of sister chromatid cohesion and couple the processes of cohesion and DNA replication to ensure that only sister chromatids become paired together. In contrast to the structural cohesins, the deposition and establishment factors are required only during S phase. The relevance of acetyltransferase function remains unclear. The sequence is that of N-acetyltransferase eso1 (eso1) from Schizosaccharomyces pombe (strain 972 / ATCC 24843) (Fission yeast).